A 306-amino-acid polypeptide reads, in one-letter code: tRNA-cytidine(32) 2-sulfurtransferase (306 aa).

Residues 1 to 25 (MSAVISLPDPQPRAARDPRVAEREQ) form a disordered region. The segment covering 14-25 (AARDPRVAEREQ) has biased composition (basic and acidic residues). The short motif at 57-62 (SGGKDS) is the PP-loop motif element. Positions 132, 135, and 223 each coordinate [4Fe-4S] cluster. Positions 286 to 306 (AHAWLAGSPADADADPETPTV) are disordered. The span at 297 to 306 (ADADPETPTV) shows a compositional bias: acidic residues.

The protein belongs to the TtcA family. In terms of assembly, homodimer. Mg(2+) serves as cofactor. Requires [4Fe-4S] cluster as cofactor.

It localises to the cytoplasm. It catalyses the reaction cytidine(32) in tRNA + S-sulfanyl-L-cysteinyl-[cysteine desulfurase] + AH2 + ATP = 2-thiocytidine(32) in tRNA + L-cysteinyl-[cysteine desulfurase] + A + AMP + diphosphate + H(+). It participates in tRNA modification. Catalyzes the ATP-dependent 2-thiolation of cytidine in position 32 of tRNA, to form 2-thiocytidine (s(2)C32). The sulfur atoms are provided by the cysteine/cysteine desulfurase (IscS) system. In Stenotrophomonas maltophilia (strain K279a), this protein is tRNA-cytidine(32) 2-sulfurtransferase.